The chain runs to 987 residues: Vacuolar membrane protease (987 aa).

Residues M1–P14 are Cytoplasmic-facing. The helical transmembrane segment at W15–I35 threads the bilayer. The Vacuolar segment spans residues H36–L384. 2 N-linked (GlcNAc...) asparagine glycosylation sites follow: N51 and N117. Zn(2+)-binding residues include H167 and D179. E213 serves as the catalytic Proton acceptor. The Zn(2+) site is built by E214, E239, and H312. Residues F385–I405 form a helical membrane-spanning segment. Topologically, residues L406 to G435 are cytoplasmic. The helical transmembrane segment at F436–M456 threads the bilayer. Residues V457–H466 lie on the Vacuolar side of the membrane. Residues S467–V487 form a helical membrane-spanning segment. The Cytoplasmic portion of the chain corresponds to S488–R501. Residues V502–Y522 traverse the membrane as a helical segment. The Vacuolar segment spans residues E523–E526. Residues G527 to I547 form a helical membrane-spanning segment. Topologically, residues S548–W649 are cytoplasmic. The disordered stretch occupies residues S572 to L600. The helical transmembrane segment at L650–L670 threads the bilayer. Over T671–L686 the chain is Vacuolar. The chain crosses the membrane as a helical span at residues L687–I707. The Cytoplasmic segment spans residues H708–P715. The helical transmembrane segment at I716–A736 threads the bilayer. Over D737–S987 the chain is Vacuolar. N-linked (GlcNAc...) asparagine glycans are attached at residues N781 and N871.

Belongs to the peptidase M28 family. It depends on Zn(2+) as a cofactor.

It localises to the vacuole membrane. Its function is as follows. May be involved in vacuolar sorting and osmoregulation. This Penicillium rubens (strain ATCC 28089 / DSM 1075 / NRRL 1951 / Wisconsin 54-1255) (Penicillium chrysogenum) protein is Vacuolar membrane protease.